Reading from the N-terminus, the 883-residue chain is uncharacterized protein (883 aa).

The interval Ile-258–Pro-373 is disordered. Low complexity-rich tracts occupy residues Asn-259–Ser-268, Glu-277–Glu-317, and Asn-324–Glu-333. Positions Ser-334–Asp-347 are enriched in polar residues. The span at Asn-348–Lys-368 shows a compositional bias: low complexity.

The protein belongs to the mimivirus L137 family.

This is an uncharacterized protein from Acanthamoeba polyphaga mimivirus (APMV).